A 651-amino-acid polypeptide reads, in one-letter code: MEHHKPLLPTSSHAAPNPRTRKDLLLLLCALLFLSSLVAFGRNRASNVPHDHVSSSASNHQQEHQSPTSLPSSKWHAVSRGVSSGVSEKSSSMLFSGEGGASEAFPWDNSMLSWQRTSFHFQPEKNWMNDPNGPMYYKGWYHFFYQYNPNGAVWGDIVWGHAVSRDMIHWLHLPLAMVADQWYDKQGVWTGSATILPNGEIIMLYTGSTNESVQVQNLAYPADPSDPLLVDWIKHPGNPVLVPPPGIGAKDFRDPTTAWLTSEGKWRITIGSKLNKTGIALVYDTDDFKTYELKNGHLRAVPGTGMWECVDFFPVSKKNENGLDTSLSINGAEVKYVMKVSLDDDRHDYYTIGTYDENKVLFTPDDVKNDVGVGLRYDYGIFYASKTFYDQNMDRRILWGWIGESDSEYADVTKGWASVQSIPRTVRLDKKTGSNLLQWPVAEVESLRLRSDEFKSLKAKPGSVVSLDIETATQLDVVAEFEIDAESLQKTAQSNEEFTCSTSGGAAQRGALGPFGLLVLADEGLSEYTPVYFYVIKGRNGNLKTSFCSDQSRSSQPNDVRKQIFGNIVPVLEGEKFSLRMLVDHSIVESFAQGGRTCVTSRVYPTKAIYGAARLFLFNNATEATVTASLKIWQMNSAFIRPFPFNPDQKN.

The Cytoplasmic portion of the chain corresponds to 1-23 (MEHHKPLLPTSSHAAPNPRTRKD). Residues 1 to 103 (MEHHKPLLPT…LFSGEGGASE (103 aa)) constitute a propeptide, removed in mature form. A helical; Signal-anchor for type II membrane protein membrane pass occupies residues 24–44 (LLLLLCALLFLSSLVAFGRNR). Over 45–651 (ASNVPHDHVS…PFPFNPDQKN (607 aa)) the chain is Lumenal. The tract at residues 48–76 (VPHDHVSSSASNHQQEHQSPTSLPSSKWH) is disordered. The segment covering 54 to 72 (SSSASNHQQEHQSPTSLPS) has biased composition (polar residues). Residues 127-130 (WMND), Gln146, Trp154, and 189-190 (WT) contribute to the substrate site. Asp130 is an active-site residue. Asn210 is a glycosylation site (N-linked (GlcNAc...) asparagine). 253–254 (RD) provides a ligand contact to substrate. Residue Asn275 is glycosylated (N-linked (GlcNAc...) asparagine). The substrate site is built by Glu308 and Asp343. Cys500 and Cys548 are joined by a disulfide. N-linked (GlcNAc...) asparagine glycosylation occurs at Asn620.

Belongs to the glycosyl hydrolase 32 family. As to quaternary structure, may be present in two forms, a 70 kDa monomer and a heterodimer of the 30 kDa and 38 kDa subunits. The ratio of the levels of the two forms within cells appears to be regulated developmentally.

The protein localises to the membrane. The protein resides in the vacuole lumen. It carries out the reaction Hydrolysis of terminal non-reducing beta-D-fructofuranoside residues in beta-D-fructofuranosides.. It participates in glycan biosynthesis; sucrose metabolism. The sequence is that of Acid beta-fructofuranosidase from Phaseolus vulgaris (Kidney bean).